We begin with the raw amino-acid sequence, 506 residues long: D-alanine--D-alanyl carrier protein ligase (506 aa).

ATP is bound at residue 152 to 153; the sequence is TS. D197 is a binding site for D-alanine. 292 to 297 contacts ATP; the sequence is NTYGPT. Residue V301 coordinates D-alanine. ATP contacts are provided by residues D383, 395 to 398, and K494; that span reads YRGR. Residue K494 coordinates D-alanine.

This sequence belongs to the ATP-dependent AMP-binding enzyme family. DltA subfamily.

It localises to the cytoplasm. The enzyme catalyses holo-[D-alanyl-carrier protein] + D-alanine + ATP = D-alanyl-[D-alanyl-carrier protein] + AMP + diphosphate. It participates in cell wall biogenesis; lipoteichoic acid biosynthesis. Functionally, catalyzes the first step in the D-alanylation of lipoteichoic acid (LTA), the activation of D-alanine and its transfer onto the D-alanyl carrier protein (Dcp) DltC. In an ATP-dependent two-step reaction, forms a high energy D-alanyl-AMP intermediate, followed by transfer of the D-alanyl residue as a thiol ester to the phosphopantheinyl prosthetic group of the Dcp. D-alanylation of LTA plays an important role in modulating the properties of the cell wall in Gram-positive bacteria, influencing the net charge of the cell wall. The protein is D-alanine--D-alanyl carrier protein ligase of Lacticaseibacillus casei (strain BL23) (Lactobacillus casei).